Consider the following 634-residue polypeptide: Endoribonuclease rege-1 (634 aa).

3 disordered regions span residues 1–33 (MDST…STPH), 90–113 (SHPS…APMI), and 156–223 (KMGL…NPDP). Basic and acidic residues predominate over residues 97–106 (ESSDPSKIDD). Low complexity-rich tracts occupy residues 182-194 (SSAS…SSSS) and 201-217 (SVSI…STPS). Positions 225–377 (LRAVVVDGSN…PSGRHGPRIE (153 aa)) constitute an RNase NYN domain. Asp-314 lines the Mg(2+) pocket. A C3H1-type zinc finger spans residues 387 to 412 (SSNPLVCPYARKCTYGNKCKFYHPER).

The protein belongs to the ZC3H12 family. It depends on Mg(2+) as a cofactor. As to expression, expressed in the intestinal cells adjacent to the pharynx.

It is found in the cytoplasm. In terms of biological role, endonuclease which binds to the 3'UTR of target mRNAs and induces degradation of the transcript. Acts together with rle-1 to repress the expression of the transcription factor ets-4 by binding to the conserved ADE (alternate decay element) and RCE (REGE-1 cleavage element) stem loop structure in its 3'UTR, which controls the expression of genes in the IIS and TORC1 pathways, including those involved in lipid metabolism and autophagosome formation. May play a role in the clearance of apoptotic cell corpses. The sequence is that of Endoribonuclease rege-1 from Caenorhabditis elegans.